A 453-amino-acid polypeptide reads, in one-letter code: GTPase Der (453 aa).

EngA-type G domains are found at residues 4 to 169 and 178 to 353; these read PIVA…PPAD and IGVA…EQHR. Residues 10 to 17, 57 to 61, 120 to 123, 184 to 191, 231 to 235, and 296 to 299 contribute to the GTP site; these read GRPNVGKS, DTGGL, NKCE, DTAGI, and NKWD. The 86-residue stretch at 354–439 folds into the KH-like domain; sequence RRVGTSVINE…PIRLFWRGKK (86 aa).

It belongs to the TRAFAC class TrmE-Era-EngA-EngB-Septin-like GTPase superfamily. EngA (Der) GTPase family. In terms of assembly, associates with the 50S ribosomal subunit.

In terms of biological role, GTPase that plays an essential role in the late steps of ribosome biogenesis. This Synechococcus sp. (strain ATCC 27144 / PCC 6301 / SAUG 1402/1) (Anacystis nidulans) protein is GTPase Der.